The chain runs to 381 residues: F-box/LRR-repeat protein At4g14103 (381 aa).

The region spanning 7-60 (RDVISSLPDDISSHILSFLPTKEAASTSVLSKKWRYLFAFVPNLDLDDSVYLNP) is the F-box domain. LRR repeat units follow at residues 118 to 146 (DLHL…KLRF), 171 to 196 (HFEE…VLDD), 218 to 243 (SWQE…KFTD), 249 to 274 (YPKV…LINY), 299 to 330 (TLYL…TIES), and 331 to 356 (NPRV…IFQG).

The polypeptide is F-box/LRR-repeat protein At4g14103 (Arabidopsis thaliana (Mouse-ear cress)).